Consider the following 199-residue polypeptide: Cutinase CUT1 (199 aa).

The N-terminal stretch at 1-18 (MKFTTLATLALGAVSALA) is a signal peptide. Positions 19-27 (APVTELESR) are excised as a propeptide. Pyrrolidone carboxylic acid is present on glutamine 28. Cysteine 31 and cysteine 105 are disulfide-bonded. Serine 116 (nucleophile) is an active-site residue. Cysteine 164 and cysteine 171 are oxidised to a cystine. Residue aspartate 168 is part of the active site. Catalysis depends on histidine 181, which acts as the Proton donor/acceptor.

Belongs to the cutinase family. The 2 disulfide bonds play a critical role in holding the catalytic residues in juxta-position; reduction of the disulfide bridges results in the complete inactivation of the enzyme.

The enzyme catalyses cutin + H2O = cutin monomers.. Catalyzes the hydrolysis of complex carboxylic polyesters found in the cell wall of plants. Degrades cutin, a macromolecule that forms the structure of the plant cuticle. Also degrades suberin, a specialized macromolecule found in the cell wall of various plant tissues. This Coprinopsis cinerea (Inky cap fungus) protein is Cutinase CUT1.